The primary structure comprises 266 residues: MLTFIGLGLFDEYDISLKGLEAVKEADLVYAEFYTSCLMGTNPEKMEKLYGKKVHLLSREDVEQHPDWLDNARDKKVAFLTGGDTMVSTTHVDLRLRAEKLGIETRLIHGASITSAVSGLTGLQNYRFGKSASIPYPYESRRGTKVISETPYDTIKQNSSFGLHTLVFLDIDKDKGFMSVNIALKLLLEVESKRGEGVMDRAVAVGIARAGSEKPVVKAGYAEDLKGFDFGKPLHILVVPGKLHFLEAEALVKLADGPEEIMENIE.

S-adenosyl-L-methionine contacts are provided by residues Leu-9, Asp-84, Val-87, 112–113 (SI), Leu-169, Ala-210, and His-235.

The protein belongs to the diphthine synthase family. Homodimer.

The enzyme catalyses 2-[(3S)-amino-3-carboxypropyl]-L-histidyl-[translation elongation factor 2] + 3 S-adenosyl-L-methionine = diphthine-[translation elongation factor 2] + 3 S-adenosyl-L-homocysteine + 3 H(+). It participates in protein modification; peptidyl-diphthamide biosynthesis. In terms of biological role, S-adenosyl-L-methionine-dependent methyltransferase that catalyzes the trimethylation of the amino group of the modified target histidine residue in translation elongation factor 2 (EF-2), to form an intermediate called diphthine. The three successive methylation reactions represent the second step of diphthamide biosynthesis. In Methanosarcina mazei (strain ATCC BAA-159 / DSM 3647 / Goe1 / Go1 / JCM 11833 / OCM 88) (Methanosarcina frisia), this protein is Diphthine synthase.